An 885-amino-acid polypeptide reads, in one-letter code: DDT domain-containing protein DDB_G0282237 (885 aa).

In terms of domain architecture, WAC spans 20–125; that stretch reads EEYFVIKFTK…GEIVSFKKAN (106 aa). Disordered regions lie at residues 141–184, 201–264, and 367–431; these read ESDE…INAL, DDEN…SVRK, and LEDT…KENE. Residues 154–180 are compositionally biased toward low complexity; the sequence is SSSSSSTTTTTTTPTTPPTTTTTTSSS. Positions 210-264 are enriched in basic and acidic residues; the sequence is KNNGDTSSDKKGEKEKEKEKEKEKEKEKEKEKEKEKEKEKEKEKEKDSDTKSVRK. The stretch at 217 to 260 forms a coiled coil; that stretch reads SDKKGEKEKEKEKEKEKEKEKEKEKEKEKEKEKEKEKEKDSDTK. Residues 367–379 are compositionally biased toward acidic residues; sequence LEDTEEESVDIES. The segment covering 380–396 has biased composition (low complexity); the sequence is NDNSNSNGNSNSNNNLD. In terms of domain architecture, DDT spans 443–503; the sequence is SNTFGDFLMV…MKTIFTLPSY (61 aa). Residues 530 to 565 are a coiled coil; the sequence is FQNEVKRIAIEEKEKQEKLKQLEEQNIRMLNLANEL. Disordered stretches follow at residues 562 to 632 and 707 to 744; these read ANEL…WKEE and KQDD…QKKP. A compositionally biased stretch (acidic residues) spans 567 to 577; that stretch reads GSDDEDDEMKL. Over residues 578–603 the composition is skewed to basic and acidic residues; sequence DEDGNEIKKDVEMKDNDGTKDTKKDD. Coiled coils occupy residues 593-628 and 674-782; these read NDGT…GEEE and ASEK…RDRN. Acidic residues-rich tracts occupy residues 604–631 and 715–729; these read EENE…EWKE and AEDD…EEQQ.

The protein resides in the nucleus. This Dictyostelium discoideum (Social amoeba) protein is DDT domain-containing protein DDB_G0282237.